We begin with the raw amino-acid sequence, 566 residues long: Transcription factor tasR (566 aa).

Over residues 1 to 30 the composition is skewed to low complexity; sequence MISASRMEESASSSSLSDAAAPPPGAALQS. Residues 1 to 31 are disordered; sequence MISASRMEESASSSSLSDAAAPPPGAALQSI. A DNA-binding region (zn(2)-C6 fungal-type) is located at residues 35 to 68; sequence CDRCRFHKLKCNVPAAGHGGPVPCERCTRAKVPC. Disordered regions lie at residues 72–174, 346–382, 422–453, and 500–551; these read RRRR…PGQH, EFIV…GGDD, SESD…TGTA, and RGVG…GLGG. Low complexity-rich tracts occupy residues 89–108 and 359–378; these read PTRR…TSAA and SESS…NNEA. The span at 501–532 shows a compositional bias: gly residues; it reads GVGGGGGGGGGGGGGGGGGVGGGGGGGGGPGG.

Its subcellular location is the nucleus. Functionally, transcription factor that regulates the expression of the gene cluster that mediates the biosynthesis of the tetramic acids Sch210971 and Sch210972, potential anti-HIV fungal natural product that contain a decalin core. This Hapsidospora irregularis protein is Transcription factor tasR.